The primary structure comprises 979 residues: DNA ligase 4 (979 aa).

The disordered stretch occupies residues 1–39; it reads MDSDEIMPDEEHPNVPVGDEESDIDEKYPNRPRNHSPTL. Positions 320, 322, 323, 327, 389, 430, 490, 495, 512, and 514 each coordinate ATP. The active-site N6-AMP-lysine intermediate is Lys322. Glu389 is a binding site for Mg(2+). A Mg(2+)-binding site is contributed by Glu490. 2 BRCT domains span residues 721-814 and 867-965; these read PSGH…PDFL and LQES…RFQP.

Belongs to the ATP-dependent DNA ligase family. The cofactor is Mg(2+).

It localises to the nucleus. It catalyses the reaction ATP + (deoxyribonucleotide)n-3'-hydroxyl + 5'-phospho-(deoxyribonucleotide)m = (deoxyribonucleotide)n+m + AMP + diphosphate.. In terms of biological role, DNA ligase involved in DNA non-homologous end joining (NHEJ); required for double-strand break (DSB) repair. This Aspergillus fumigatus (strain ATCC MYA-4609 / CBS 101355 / FGSC A1100 / Af293) (Neosartorya fumigata) protein is DNA ligase 4 (lig4).